A 637-amino-acid chain; its full sequence is MGKIIGIDLGTTNSCVAVMEAGEPKVITNSEGNRTTPSVVALTEGGDRLVGQTAKRQAITNPENTVFGVKRLIGRKFDSPQIQGDKKVLPYKIEASANGDTRINLRGKQHSPAEISSFILANIKKTAEDYLGEEVTEAVITVPAYFNDSQRQATKDAGKIAGLTVKRIINEPTAASLAYGLDKKGEEKIVVFDLGGGTFDVSVLEIGDGVFEVKSTNGDTHLGGEDFDLRIIDYIADEFKKSQGIDIRGDKMALQRLKEAAEKAKMELSSAVETDINLPFITADASGPKHLDVKLTRAKLESLVADLLDNLVAPCKTALKDAGLTSSDINEVVLVGGMTRMPAVQERVEKIFSKKPHKGVNPDEVVAMGAAIQAGVLQGDVHDVLLLDVTPLSLGIETLGGVMTKLIDKNTTIPTKKSQVFSTAADSQPAVSIHVLQGEREMAAGNKTLGQFELTDLPPAPRGVPQIEVTFDIDANGIVHVAAKDKATGKEQSIRITAASGLSEEEIKKMVNDAELHADEDKKKHELVDAKNTAESLIHQTEKTLKEHGDKVDAATKTAIEAACEELKKVKEGTDAAIIKEKSEALTQASHKLAEAMYQQAAQESGQTEGAAQDPKGAAQDDDVVDADFEEVKDHKK.

Thr198 is subject to Phosphothreonine; by autocatalysis. The disordered stretch occupies residues 597–637; sequence MYQQAAQESGQTEGAAQDPKGAAQDDDVVDADFEEVKDHKK. Residues 600 to 610 are compositionally biased toward polar residues; that stretch reads QAAQESGQTEG. Residues 620–629 are compositionally biased toward acidic residues; it reads QDDDVVDADF.

This sequence belongs to the heat shock protein 70 family.

Functionally, acts as a chaperone. The polypeptide is Chaperone protein DnaK (Desulforapulum autotrophicum (strain ATCC 43914 / DSM 3382 / VKM B-1955 / HRM2) (Desulfobacterium autotrophicum)).